A 1887-amino-acid chain; its full sequence is Protein TIC 214 (1887 aa).

Helical transmembrane passes span 18 to 38, 64 to 84, 87 to 107, 124 to 144, 172 to 192, and 221 to 241; these read IINS…FSIG, FITG…HLAL, PHTI…WNNH, LSIQ…HFIL, VGWL…LVWI, and IFSI…PSPI. Disordered stretches follow at residues 248–300, 785–805, and 1569–1603; these read EASK…EGWD, REEQ…DNKR, and LPSN…NLSP. Residues 256 to 268 are compositionally biased toward acidic residues; that stretch reads VESEEERDVEIET. The span at 1578-1597 shows a compositional bias: basic and acidic residues; that stretch reads RSQETKEPPSQRERGSDIEN.

The protein belongs to the TIC214 family. In terms of assembly, part of the Tic complex.

It is found in the plastid. It localises to the chloroplast inner membrane. Its function is as follows. Involved in protein precursor import into chloroplasts. May be part of an intermediate translocation complex acting as a protein-conducting channel at the inner envelope. This chain is Protein TIC 214, found in Solanum tuberosum (Potato).